Reading from the N-terminus, the 116-residue chain is MSSSKGDEEINSNNEEMLGIDKLSVDYDYLLYKINDYVNSIQIQTKEVCQRQNELISQNVVEDIVDVNIQSFKDILSKCEELENYFTMLDQIEMISDTFHGRIDDVLKEYRKLNGN.

Positions 63–95 form a coiled coil; sequence DIVDVNIQSFKDILSKCEELENYFTMLDQIEMI.

It belongs to the BLOC1S4 family. In terms of assembly, component of the biogenesis of lysosome-related organelles complex-1 (BLOC-1).

The protein resides in the cytoplasm. Component of the biogenesis of lysosome-related organelles complex-1 (BLOC-1), a complex that is involved in endosomal cargo sorting. The sequence is that of Biogenesis of lysosome-related organelles complex 1 subunit CNL1 (CLN1) from Vanderwaltozyma polyspora (strain ATCC 22028 / DSM 70294 / BCRC 21397 / CBS 2163 / NBRC 10782 / NRRL Y-8283 / UCD 57-17) (Kluyveromyces polysporus).